A 285-amino-acid chain; its full sequence is Putative quercetin 2,3-dioxygenase PA3240 (285 aa).

H60, H62, H104, and E106 together coordinate a divalent metal cation.

The protein belongs to the pirin family. Requires a divalent metal cation as cofactor.

The catalysed reaction is quercetin + O2 = 2-(3,4-dihydroxybenzoyloxy)-4,6-dihydroxybenzoate + CO. The protein operates within flavonoid metabolism; quercetin degradation. Its function is as follows. Putative quercetin 2,3-dioxygenase. This Pseudomonas aeruginosa (strain ATCC 15692 / DSM 22644 / CIP 104116 / JCM 14847 / LMG 12228 / 1C / PRS 101 / PAO1) protein is Putative quercetin 2,3-dioxygenase PA3240.